The primary structure comprises 2264 residues: RNA1 polyprotein (2264 aa).

Topologically, residues 566 to 1156 are cytoplasmic; sequence MCTALAAGIF…MGRTYLAENG (591 aa). An SF3 helicase domain is found at 750 to 916; it reads TEGPNELHKR…PGVLFDPDNP (167 aa). 780–787 provides a ligand contact to ATP; sequence GQRHCGKS. Residues 1157–1177 form a helical membrane-spanning segment; the sequence is CGILMIAAALILILVSAWGFW. At 1178–1203 the chain is on the lumenal side; that stretch reads KLFIGLFSGSMSLGAAIVGMSAVDIK. The region spanning 1227–1436 is the Peptidase C3 domain; it reads AYAKSQAGDG…WADIMPPNTL (210 aa). Active-site for picornain 3C-like protease activity residues include H1270, E1308, and C1400. Positions 1713–1841 constitute a RdRp catalytic domain; it reads NEAINCDYSG…SVSPSIASWF (129 aa).

The protein belongs to the nepoviruses RNA1 polyprotein family. Specific enzymatic cleavages by picornain 3C-like protease in vivo yield mature proteins. Picornain 3C-like protease is autocatalytically processed. Post-translationally, VPg is uridylylated by the polymerase and is covalently linked to the 5'-end of genomic RNA. This uridylylated form acts as a nucleotide-peptide primer for the polymerase.

The protein resides in the host endoplasmic reticulum lumen. The protein localises to the host endoplasmic reticulum membrane. The enzyme catalyses RNA(n) + a ribonucleoside 5'-triphosphate = RNA(n+1) + diphosphate. Its function is as follows. Picornain 3C-like protease is a thiol protease that cleaves the P1 and P2 polyproteins. In Beet ringspot virus (BRSV), this protein is RNA1 polyprotein.